Consider the following 251-residue polypeptide: L-ascorbate peroxidase 2, cytosolic (251 aa).

His43 serves as the catalytic Proton acceptor. Residues 113-137 form a disordered region; it reads EVPFHPGRQDKPEPPPEGRLPDATQ. The span at 119–132 shows a compositional bias: basic and acidic residues; that stretch reads GRQDKPEPPPEGRL. Heme b is bound at residue His164. K(+) is bound by residues Thr165, Thr181, Asn183, Ile186, and Asp188.

It belongs to the peroxidase family. Ascorbate peroxidase subfamily. The cofactor is heme b. Expressed in aerial vegetative parts and reproductive organs. Expressed in roots, leaves, stems and flowers. Expressed in young leaves, internodes, blade ears, stems and anthers.

It localises to the cytoplasm. The catalysed reaction is L-ascorbate + H2O2 = L-dehydroascorbate + 2 H2O. With respect to regulation, inhibited by p-chloromercuriphenylsulfonic acid (CMPSA). In terms of biological role, plays a key role in hydrogen peroxide removal. Plays an important role in plant growth and development by protecting the seedlings from abiotic stresses through scavenging reactive oxygen species. Required for pollen viability. This chain is L-ascorbate peroxidase 2, cytosolic, found in Oryza sativa subsp. japonica (Rice).